Reading from the N-terminus, the 1010-residue chain is Trifunctional purine biosynthetic protein adenosine-3 (1010 aa).

At Ala2 the chain carries N-acetylalanine. The ATP-grasp domain occupies 111–318; sequence KEFMDRHGIS…LYEVIQSILD (208 aa). Residues 190-193, Glu197, Arg220, and Asn229 contribute to the ATP site; that span reads EELL. Glu288 and Asn290 together coordinate Mg(2+). Lys350 carries the post-translational modification N6-acetyllysine. An AIRS domain region spans residues 434–809; that stretch reads GLTYKESGVD…HFSVQPKKAR (376 aa). Position 440 is a phosphoserine (Ser440). Thr682 carries the post-translational modification Phosphothreonine. Ser802 is subject to Phosphoserine. A GART domain region spans residues 810-1010; it reads VAVLISGTGS…NGRICWVTED (201 aa). A N(1)-(5-phospho-beta-D-ribosyl)glycinamide-binding site is contributed by 818 to 820; that stretch reads GSN. (6R)-10-formyltetrahydrofolate-binding positions include Arg871, 896 to 899, and Asn913; that span reads MRIL. Residue His915 is the Proton donor of the active site. 947-951 lines the (6R)-10-formyltetrahydrofolate pocket; the sequence is AEDVD. 977–980 is a binding site for N(1)-(5-phospho-beta-D-ribosyl)glycinamide; that stretch reads KLAE.

It in the N-terminal section; belongs to the GARS family. This sequence in the central section; belongs to the AIR synthase family. In the C-terminal section; belongs to the GART family. As to quaternary structure, homodimer. Mg(2+) is required as a cofactor. Requires Mn(2+) as cofactor.

The enzyme catalyses 5-phospho-beta-D-ribosylamine + glycine + ATP = N(1)-(5-phospho-beta-D-ribosyl)glycinamide + ADP + phosphate + H(+). The catalysed reaction is 2-formamido-N(1)-(5-O-phospho-beta-D-ribosyl)acetamidine + ATP = 5-amino-1-(5-phospho-beta-D-ribosyl)imidazole + ADP + phosphate + H(+). It catalyses the reaction N(1)-(5-phospho-beta-D-ribosyl)glycinamide + (6R)-10-formyltetrahydrofolate = N(2)-formyl-N(1)-(5-phospho-beta-D-ribosyl)glycinamide + (6S)-5,6,7,8-tetrahydrofolate + H(+). It functions in the pathway purine metabolism; IMP biosynthesis via de novo pathway; 5-amino-1-(5-phospho-D-ribosyl)imidazole from N(2)-formyl-N(1)-(5-phospho-D-ribosyl)glycinamide: step 2/2. It participates in purine metabolism; IMP biosynthesis via de novo pathway; N(1)-(5-phospho-D-ribosyl)glycinamide from 5-phospho-alpha-D-ribose 1-diphosphate: step 2/2. The protein operates within purine metabolism; IMP biosynthesis via de novo pathway; N(2)-formyl-N(1)-(5-phospho-D-ribosyl)glycinamide from N(1)-(5-phospho-D-ribosyl)glycinamide (10-formyl THF route): step 1/1. Trifunctional enzyme that catalyzes three distinct reactions as part of the 'de novo' inosine monophosphate biosynthetic pathway. This chain is Trifunctional purine biosynthetic protein adenosine-3 (GART), found in Bos taurus (Bovine).